Reading from the N-terminus, the 243-residue chain is Orotidine 5'-phosphate decarboxylase (243 aa).

Substrate is bound by residues Asp19, Lys41, 69–78, Thr124, Arg185, Gln194, Gly214, and Arg215; that span reads DLKFFDIPAT. Lys71 functions as the Proton donor in the catalytic mechanism.

The protein belongs to the OMP decarboxylase family. Type 1 subfamily. As to quaternary structure, homodimer.

It catalyses the reaction orotidine 5'-phosphate + H(+) = UMP + CO2. It functions in the pathway pyrimidine metabolism; UMP biosynthesis via de novo pathway; UMP from orotate: step 2/2. Catalyzes the decarboxylation of orotidine 5'-monophosphate (OMP) to uridine 5'-monophosphate (UMP). The protein is Orotidine 5'-phosphate decarboxylase of Xanthomonas campestris pv. campestris (strain B100).